Consider the following 1502-residue polypeptide: MSSWLPQNVQKRLLLYVLQQVSLFSNVDLTNLDVSLGSQSQFSFNDIDLNVKEIKLPNVDVLSGKIEKLNLQLAVAGNVDISGEGLTFVLKPIDRFFEDDLSDQWASSLTKSVIDMTKSIMESDVTDSSEHSVEALEEVSKSPTALDSMRNKVLQMALGKLSLKMKRIEFQFLLSTEVTLKFTIDTITLLTVDNKRTVDMGGIEVAFSKTQLSPTNSHQNTDSDVEENENTDSEDAMTASITYSKLEATSIYLSAMESLILESSDDAVQVVLTIDKVNIQFQGVTSINDLKVRDVIIRIDEINIYLRKISPIRKHLLSILRASLDKTSSDGTRTENMRNYKRFQQEQNIKEEEVLTAILLKKVSLHLLDDLELNLIDISLKKSEGFTTSASVFDLKLLYMSNEYFFSSPSAQPLFSMQPDQTTAEKKMFLNRDITLNVDSVLLNELLKLVEEYGSAYNYIQKITRASANQKTAEVLHFKSQSINLKILMNNISLELSMDPIKSTLPHTLFDVEKISLLLIRGDKKVLIGTLSNLIISSKTNGCFHVESFDHKFGAIDINTRTKAVLESLHLFLSQAELELISSNLIAFCGSISSFTNPNTRNNGHENVTKKSVRLLHSSNVMNKRATLSNFVLQVHKAKMTITNTLENTFGDITIEAISCILSQDQNKTLCGIVKEARLQRLYMREKTDIICNVNHDRSKPQLILNMPNSGKPKLYLKGLGLFIDSKWRDLVPSSSKGDIKQERKLTFRTMEVRLYDCSLSLKPYRICTGMVISIPKSIINFSPLGITVSLRSLETLLIDDMKVLKERNTKVLENISLSTWYQKQGYSPLIKVDVLSLHFSNTDSMAVSLKVQKVDVSVCSDSLNALMQTALDLKPAETYPDTLKYQIEPEAVDIFNELCEDFFVTKENPNDKTEDDYETPPVSQGSVNFEEEHFSTERRTVVENDSKSSVFSILTTIKIHIEEVKLKLYDGYEWRHTRKEIKSAVDRIQEDFNDGLELSETKVFDSIYIPAPKDTVENIKDNINRKIHNEETNEGKMKLRPTKKYKVLIKGRDLCIEFKGGQDKIAERASSLSSINDYCILNNTFVKVSDLEIIDNLPTSTWNKFLTRSRSNDKMAQEPAMLVIECSLIRPVPHLYATELICNINIVPLTLHVDQDTLEFLTLFFQFKDNRFELLDEYPDILYIQRLEINSVRLLLDYKPKKVDYAGLKSGKTKEFMNFFILDEARIKLKHVILYGVNGFPQLETILSDIWTPDITKTQIPGILSALTPLKPLAGLSYGARALISVPTEHYQQNGRFGGSLQNGGMVFLKTTGGEVIKLAVRLTSGTQTILENTEKLLGGQGITGRNVPITLVEGDEKVDALIDESLLRSTALFNKEPDNKSNHLDVLLADGNHQKVLSLYADQPKDFNSGLQDAYESMERNLYLTFDSMKKAKKELKTAKGAQEAVSTVAKAAPFVLIRPLIGVTEALSKTLQGLNNQYDEDRIAQIEEKYKSKKQNNNQ.

A compositionally biased stretch (polar residues) spans 211-222 (QLSPTNSHQNTD). The interval 211 to 234 (QLSPTNSHQNTDSDVEENENTDSE) is disordered. Positions 223–234 (SDVEENENTDSE) are enriched in acidic residues.

This sequence belongs to the ATG2 family.

It localises to the preautophagosomal structure membrane. The protein localises to the endoplasmic reticulum membrane. It carries out the reaction a 1,2-diacyl-sn-glycero-3-phosphocholine(in) = a 1,2-diacyl-sn-glycero-3-phosphocholine(out). It catalyses the reaction a 1,2-diacyl-sn-glycero-3-phospho-L-serine(in) = a 1,2-diacyl-sn-glycero-3-phospho-L-serine(out). The catalysed reaction is a 1,2-diacyl-sn-glycero-3-phosphoethanolamine(in) = a 1,2-diacyl-sn-glycero-3-phosphoethanolamine(out). In terms of biological role, lipid transfer protein required for autophagosome completion and peroxisome degradation. Tethers the edge of the isolation membrane (IM) to the endoplasmic reticulum (ER) and mediates direct lipid transfer from ER to IM for IM expansion. ATG2 binds to the ER exit site (ERES), which is the membrane source for autophagosome formation, using basic residues in its N-terminal region (NR) and to the expanding edge of the IM through its C-terminal region. The latter binding is assisted by an ATG18-PtdIns3P interaction. ATG2 then extracts phospholipids from the membrane source using its NR and transfers them to ATG9 to the IM through its predicted beta-sheet-rich structure for membrane expansion. This chain is Autophagy-related protein 2 (ATG2), found in Kluyveromyces lactis (strain ATCC 8585 / CBS 2359 / DSM 70799 / NBRC 1267 / NRRL Y-1140 / WM37) (Yeast).